The sequence spans 324 residues: tRNA N6-adenosine threonylcarbamoyltransferase (324 aa).

The Fe cation site is built by His-107, His-111, and Tyr-127. Substrate is bound by residues 127 to 131 (YVSGG), Asp-159, Gly-172, Glu-176, and Asn-257. Residue Asp-285 coordinates Fe cation.

Belongs to the KAE1 / TsaD family. As to quaternary structure, monomer. Component of the KEOPS complex that consists of Kae1, Bud32, Cgi121 and Pcc1; the whole complex dimerizes. The cofactor is Fe(2+).

The protein localises to the cytoplasm. The catalysed reaction is L-threonylcarbamoyladenylate + adenosine(37) in tRNA = N(6)-L-threonylcarbamoyladenosine(37) in tRNA + AMP + H(+). Required for the formation of a threonylcarbamoyl group on adenosine at position 37 (t(6)A37) in tRNAs that read codons beginning with adenine. Is a component of the KEOPS complex that is probably involved in the transfer of the threonylcarbamoyl moiety of threonylcarbamoyl-AMP (TC-AMP) to the N6 group of A37. Kae1 likely plays a direct catalytic role in this reaction, but requires other protein(s) of the complex to fulfill this activity. In Pyrococcus furiosus (strain ATCC 43587 / DSM 3638 / JCM 8422 / Vc1), this protein is tRNA N6-adenosine threonylcarbamoyltransferase.